Consider the following 397-residue polypeptide: G2/mitotic-specific cyclin-B2 (397 aa).

2 disordered regions span residues 1–20 (MALLRRPTVSSDLKNIDTGV) and 64–97 (KVTHVNKQPKPTASVKPVQMETLAPKDPPAPEDV). T8 carries the phosphothreonine modification. The residue at position 11 (S11) is a Phosphoserine. A compositionally biased stretch (polar residues) spans 64–74 (KVTHVNKQPKP). A phosphoserine mark is found at S77, S98, and S391.

This sequence belongs to the cyclin family. Cyclin AB subfamily. In terms of assembly, interacts with the CDK1 protein kinase to form a serine/threonine kinase holoenzyme complex also known as maturation promoting factor (MPF). The cyclin subunit imparts substrate specificity to the complex.

Essential for the control of the cell cycle at the G2/M (mitosis) transition. This Mesocricetus auratus (Golden hamster) protein is G2/mitotic-specific cyclin-B2 (CCNB2).